A 414-amino-acid chain; its full sequence is Putative gustatory receptor 47b (414 aa).

Over Met1–Asp5 the chain is Cytoplasmic. The chain crosses the membrane as a helical span at residues Gly6–Ile26. Topologically, residues Arg27–Arg40 are extracellular. The chain crosses the membrane as a helical span at residues Trp41–Val61. Residues Met62–Lys142 lie on the Cytoplasmic side of the membrane. The helical transmembrane segment at Tyr143–Phe163 threads the bilayer. Over Asp164 to Tyr182 the chain is Extracellular. The helical transmembrane segment at Thr183 to Ile203 threads the bilayer. Residues Arg204–Gly249 are Cytoplasmic-facing. A helical transmembrane segment spans residues Val250 to Val270. At Tyr271–Leu291 the chain is on the extracellular side. A helical transmembrane segment spans residues Leu292–Leu312. At Arg313–Ser364 the chain is on the cytoplasmic side. A helical membrane pass occupies residues Thr365–Phe385. Residues Gln386 to Asp414 are Extracellular-facing.

This sequence belongs to the insect chemoreceptor superfamily. Gustatory receptor (GR) family. Gr57a subfamily. As to expression, expressed in neurons of the terminal external chemosensory organ of larvae.

It localises to the cell membrane. Probable gustatory receptor which mediates acceptance or avoidance behavior, depending on its substrates. The polypeptide is Putative gustatory receptor 47b (Gr47b) (Drosophila melanogaster (Fruit fly)).